The primary structure comprises 242 residues: Small ribosomal subunit protein uS2 (242 aa).

Belongs to the universal ribosomal protein uS2 family.

This Idiomarina loihiensis (strain ATCC BAA-735 / DSM 15497 / L2-TR) protein is Small ribosomal subunit protein uS2.